The primary structure comprises 156 residues: Transcription antitermination protein NusB (156 aa).

It belongs to the NusB family.

Its function is as follows. Involved in transcription antitermination. Required for transcription of ribosomal RNA (rRNA) genes. Binds specifically to the boxA antiterminator sequence of the ribosomal RNA (rrn) operons. The sequence is that of Transcription antitermination protein NusB from Xanthomonas oryzae pv. oryzae (strain MAFF 311018).